Reading from the N-terminus, the 142-residue chain is ATP synthase subunit b' (142 aa).

A helical membrane pass occupies residues 7 to 27 (TLPLMMFQFFLLVAVLNAVFF).

The protein belongs to the ATPase B chain family. In terms of assembly, F-type ATPases have 2 components, F(1) - the catalytic core - and F(0) - the membrane proton channel. F(1) has five subunits: alpha(3), beta(3), gamma(1), delta(1), epsilon(1). F(0) has four main subunits: a(1), b(1), b'(1) and c(10-14). The alpha and beta chains form an alternating ring which encloses part of the gamma chain. F(1) is attached to F(0) by a central stalk formed by the gamma and epsilon chains, while a peripheral stalk is formed by the delta, b and b' chains.

It is found in the cellular thylakoid membrane. Functionally, f(1)F(0) ATP synthase produces ATP from ADP in the presence of a proton or sodium gradient. F-type ATPases consist of two structural domains, F(1) containing the extramembraneous catalytic core and F(0) containing the membrane proton channel, linked together by a central stalk and a peripheral stalk. During catalysis, ATP synthesis in the catalytic domain of F(1) is coupled via a rotary mechanism of the central stalk subunits to proton translocation. In terms of biological role, component of the F(0) channel, it forms part of the peripheral stalk, linking F(1) to F(0). The b'-subunit is a diverged and duplicated form of b found in plants and photosynthetic bacteria. The protein is ATP synthase subunit b' of Acaryochloris marina (strain MBIC 11017).